Here is a 1253-residue protein sequence, read N- to C-terminus: Methionine synthase (1253 aa).

The Hcy-binding domain occupies 6 to 326 (QDEIEAILRK…DHIREIAEAV (321 aa)). Residues cysteine 248, cysteine 311, and cysteine 312 each contribute to the Zn(2+) site. Residues 359–620 (FVNIGERCNV…IHKDLLQLCE (262 aa)) enclose the Pterin-binding domain. Residues 370–372 (GSK), aspartate 437, asparagine 458, aspartate 525, asparagine 567, arginine 573, and arginine 579 each bind (6S)-5,6,7,8-tetrahydrofolate. The B12-binding N-terminal domain occupies 650–747 (QTDEWRNGSI…FMEKEREEAR (98 aa)). Methylcob(III)alamin is bound by residues glutamate 697, 770 to 774 (GDVHD), histidine 773, serine 818, threonine 822, and alanine 874. A B12-binding domain is found at 760-895 (QGTIVLATVK…DENLKDDYFE (136 aa)). The AdoMet activation domain maps to 911–1253 (SLKERKYLPL…LGPILGYDTD (343 aa)). Residues aspartate 962, arginine 1160, and 1215–1216 (YF) contribute to the S-adenosyl-L-methionine site. Threonine 1252 carries the phosphothreonine modification.

It belongs to the vitamin-B12 dependent methionine synthase family. As to quaternary structure, monomer. Dimer. Forms a multiprotein complex with MMACHC, MMADHC and MTRR. Methylcob(III)alamin serves as cofactor. The cofactor is Zn(2+).

It is found in the cytoplasm. It catalyses the reaction (6S)-5-methyl-5,6,7,8-tetrahydrofolate + L-homocysteine = (6S)-5,6,7,8-tetrahydrofolate + L-methionine. The protein operates within amino-acid biosynthesis; L-methionine biosynthesis via de novo pathway; L-methionine from L-homocysteine (MetH route): step 1/1. Catalyzes the transfer of a methyl group from methylcob(III)alamin (MeCbl) to homocysteine, yielding enzyme-bound cob(I)alamin and methionine in the cytosol. MeCbl is an active form of cobalamin (vitamin B12) used as a cofactor for methionine biosynthesis. Cob(I)alamin form is regenerated to MeCbl by a transfer of a methyl group from 5-methyltetrahydrofolate. The processing of cobalamin in the cytosol occurs in a multiprotein complex composed of at least MMACHC, MMADHC, MTRR (methionine synthase reductase) and MTR which may contribute to shuttle safely and efficiently cobalamin towards MTR in order to produce methionine. This is Methionine synthase (Mtr) from Rattus norvegicus (Rat).